We begin with the raw amino-acid sequence, 210 residues long: Thymidylate kinase (210 aa).

11 to 18 serves as a coordination point for ATP; the sequence is GLEGAGKS.

Belongs to the thymidylate kinase family.

The enzyme catalyses dTMP + ATP = dTDP + ADP. Phosphorylation of dTMP to form dTDP in both de novo and salvage pathways of dTTP synthesis. The chain is Thymidylate kinase from Histophilus somni (strain 2336) (Haemophilus somnus).